The following is a 143-amino-acid chain: Transcriptional regulator MraZ (143 aa).

SpoVT-AbrB domains follow at residues 5–47 and 76–119; these read TYTP…PRDE and TDEQ…DAQA.

The protein belongs to the MraZ family. In terms of assembly, forms oligomers.

The protein resides in the cytoplasm. It localises to the nucleoid. The protein is Transcriptional regulator MraZ of Mycolicibacterium smegmatis (strain ATCC 700084 / mc(2)155) (Mycobacterium smegmatis).